The sequence spans 260 residues: UPF0294 protein YPO1077/y3099/YP_2772 (260 aa).

This sequence belongs to the UPF0294 family.

It localises to the cytoplasm. The sequence is that of UPF0294 protein YPO1077/y3099/YP_2772 from Yersinia pestis.